The sequence spans 100 residues: Large ribosomal subunit protein bL27 (100 aa).

Residues 1–9 (MLVMNLQLF) constitute a propeptide that is removed on maturation.

This sequence belongs to the bacterial ribosomal protein bL27 family. The N-terminus is cleaved by ribosomal processing cysteine protease Prp.

The chain is Large ribosomal subunit protein bL27 from Clostridium botulinum (strain Hall / ATCC 3502 / NCTC 13319 / Type A).